Here is a 360-residue protein sequence, read N- to C-terminus: S-adenosylmethionine:tRNA ribosyltransferase-isomerase (360 aa).

The protein belongs to the QueA family. As to quaternary structure, monomer.

The protein resides in the cytoplasm. The catalysed reaction is 7-aminomethyl-7-carbaguanosine(34) in tRNA + S-adenosyl-L-methionine = epoxyqueuosine(34) in tRNA + adenine + L-methionine + 2 H(+). It participates in tRNA modification; tRNA-queuosine biosynthesis. In terms of biological role, transfers and isomerizes the ribose moiety from AdoMet to the 7-aminomethyl group of 7-deazaguanine (preQ1-tRNA) to give epoxyqueuosine (oQ-tRNA). In Rhodopseudomonas palustris (strain BisB5), this protein is S-adenosylmethionine:tRNA ribosyltransferase-isomerase.